The chain runs to 200 residues: Recombination protein RecR (200 aa).

The C4-type zinc-finger motif lies at Cys-60 to Cys-75. A Toprim domain is found at Thr-83–Pro-177.

The protein belongs to the RecR family.

In terms of biological role, may play a role in DNA repair. It seems to be involved in an RecBC-independent recombinational process of DNA repair. It may act with RecF and RecO. This is Recombination protein RecR from Francisella tularensis subsp. tularensis (strain SCHU S4 / Schu 4).